The primary structure comprises 107 residues: Essential MCU regulator, mitochondrial (107 aa).

The transit peptide at 1–47 (MASTAARRLAWVAVRPGALWSGPRGRRGGDVYTVPGSSGLSQVPSRS) directs the protein to the mitochondrion. Residues 48 to 65 (VIVTRSGAILPKPVKMSF) lie on the Mitochondrial matrix side of the membrane. A helical membrane pass occupies residues 66–85 (GLLRVFSIVIPFLYVGTLIS). The GXXXX[G/A/S] signature appears at 81–85 (GTLIS). The Mitochondrial intermembrane portion of the chain corresponds to 86–107 (KNFAALLEEHDIFVPEDDDDDD).

This sequence belongs to the SMDT1/EMRE family. In terms of assembly, component of the uniplex complex, composed of MCU, EMRE/SMDT1, MICU1 and MICU2 (or MICU3) in a 4:4:1:1 stoichiometry. The number of EMRE/SMDT1 molecules is hovewer variable, ranging from 1 to 4 copies per uniplex complex, leading to uniplex complexes with distinct gatekeeping profiles. Interacts (via its C-terminal poly-Asp tail) with MCUR1; the interaction is direct. Unprocessed form interacts (via transit peptide) with MAIP1. Post-translationally, undergoes proteolytic degradation in neurons: degraded by AFG3L2 and SPG7 before SMDT1/EMRE assembly with the uniporter complex, limiting the availability of SMDT1/EMRE for MCU assembly and promoting efficient assembly of gatekeeper subunits with MCU. In terms of tissue distribution, widely expressed.

It localises to the mitochondrion inner membrane. Essential regulatory subunit of the mitochondrial calcium uniporter complex (uniplex), a complex that mediates calcium uptake into mitochondria. Required to bridge the calcium-sensing proteins MICU1 with the calcium-conducting subunit MCU. Acts by mediating activation of MCU and retention of MICU1 to the MCU pore, in order to ensure tight regulation of the uniplex complex and appropriate responses to intracellular calcium signaling. The sequence is that of Essential MCU regulator, mitochondrial from Mus musculus (Mouse).